Consider the following 71-residue polypeptide: V-type proton ATPase subunit e (71 aa).

Topologically, residues 1–2 are lumenal; that stretch reads MS. A helical membrane pass occupies residues 3 to 23; sequence FFHVVFVAFVIAAIGAAGWFV. The Cytoplasmic portion of the chain corresponds to 24 to 35; sequence TPKGKNQTLLRT. A helical membrane pass occupies residues 36–56; it reads SLLLTLTCCYLMWAITYLCQL. Residues 57-71 are Lumenal-facing; sequence HPLITPRRSDLRMEY.

This sequence belongs to the V-ATPase e1/e2 subunit family. As to quaternary structure, V-ATPase is a heteromultimeric enzyme composed of a peripheral catalytic V1 complex (components A to H) attached to an integral membrane V0 proton pore complex (components: a, c, c', c'', d, e, f and VOA1).

The protein resides in the vacuole membrane. In terms of biological role, subunit of the V0 complex of vacuolar(H+)-ATPase (V-ATPase), a multisubunit enzyme composed of a peripheral complex (V1) that hydrolyzes ATP and a membrane integral complex (V0) that translocates protons. V-ATPase is responsible for acidifying and maintaining the pH of intracellular compartments. The chain is V-type proton ATPase subunit e (VMA9) from Cryptococcus neoformans var. neoformans serotype D (strain JEC21 / ATCC MYA-565) (Filobasidiella neoformans).